The chain runs to 219 residues: Thiamine-phosphate synthase (219 aa).

Residues 44 to 48 (QFREK) and Asn-79 each bind 4-amino-2-methyl-5-(diphosphooxymethyl)pyrimidine. Mg(2+)-binding residues include Asp-80 and Asp-99. Residue Ser-117 participates in 4-amino-2-methyl-5-(diphosphooxymethyl)pyrimidine binding. Position 143–145 (143–145 (TST)) interacts with 2-[(2R,5Z)-2-carboxy-4-methylthiazol-5(2H)-ylidene]ethyl phosphate. Lys-146 is a 4-amino-2-methyl-5-(diphosphooxymethyl)pyrimidine binding site. 2-[(2R,5Z)-2-carboxy-4-methylthiazol-5(2H)-ylidene]ethyl phosphate contacts are provided by residues Gly-175 and 195 to 196 (IS).

This sequence belongs to the thiamine-phosphate synthase family. It depends on Mg(2+) as a cofactor.

The enzyme catalyses 2-[(2R,5Z)-2-carboxy-4-methylthiazol-5(2H)-ylidene]ethyl phosphate + 4-amino-2-methyl-5-(diphosphooxymethyl)pyrimidine + 2 H(+) = thiamine phosphate + CO2 + diphosphate. It carries out the reaction 2-(2-carboxy-4-methylthiazol-5-yl)ethyl phosphate + 4-amino-2-methyl-5-(diphosphooxymethyl)pyrimidine + 2 H(+) = thiamine phosphate + CO2 + diphosphate. The catalysed reaction is 4-methyl-5-(2-phosphooxyethyl)-thiazole + 4-amino-2-methyl-5-(diphosphooxymethyl)pyrimidine + H(+) = thiamine phosphate + diphosphate. It participates in cofactor biosynthesis; thiamine diphosphate biosynthesis; thiamine phosphate from 4-amino-2-methyl-5-diphosphomethylpyrimidine and 4-methyl-5-(2-phosphoethyl)-thiazole: step 1/1. Its function is as follows. Condenses 4-methyl-5-(beta-hydroxyethyl)thiazole monophosphate (THZ-P) and 2-methyl-4-amino-5-hydroxymethyl pyrimidine pyrophosphate (HMP-PP) to form thiamine monophosphate (TMP). This is Thiamine-phosphate synthase from Bacillus thuringiensis (strain Al Hakam).